The chain runs to 229 residues: Protein-L-isoaspartate O-methyltransferase (229 aa).

Residue Ser-78 is part of the active site.

It belongs to the methyltransferase superfamily. L-isoaspartyl/D-aspartyl protein methyltransferase family.

The protein resides in the cytoplasm. The enzyme catalyses [protein]-L-isoaspartate + S-adenosyl-L-methionine = [protein]-L-isoaspartate alpha-methyl ester + S-adenosyl-L-homocysteine. Catalyzes the methyl esterification of L-isoaspartyl residues in peptides and proteins that result from spontaneous decomposition of normal L-aspartyl and L-asparaginyl residues. It plays a role in the repair and/or degradation of damaged proteins. This Chromohalobacter salexigens (strain ATCC BAA-138 / DSM 3043 / CIP 106854 / NCIMB 13768 / 1H11) protein is Protein-L-isoaspartate O-methyltransferase.